The sequence spans 166 residues: Cyanate hydratase (166 aa).

Catalysis depends on residues arginine 106, glutamate 109, and serine 132.

Belongs to the cyanase family.

It carries out the reaction cyanate + hydrogencarbonate + 3 H(+) = NH4(+) + 2 CO2. Catalyzes the reaction of cyanate with bicarbonate to produce ammonia and carbon dioxide. In Verticillium alfalfae (strain VaMs.102 / ATCC MYA-4576 / FGSC 10136) (Verticillium wilt of alfalfa), this protein is Cyanate hydratase.